We begin with the raw amino-acid sequence, 271 residues long: N-acetyltransferase ECO1 (271 aa).

The interval Met1–Ser38 is disordered. Over residues Ser20–Pro31 the composition is skewed to low complexity. Residues Thr80–His104 form a CCHH-type zinc finger.

The protein belongs to the acetyltransferase family. ECO subfamily.

The protein resides in the nucleus. In terms of biological role, probable acetyltransferase required for the establishment of sister chromatid cohesion and couple the processes of cohesion and DNA replication to ensure that only sister chromatids become paired together. In contrast to the structural cohesins, the deposition and establishment factors are required only during S phase. Acts by acetylating the cohesin complex component SMC3. This chain is N-acetyltransferase ECO1 (ECO1), found in Yarrowia lipolytica (strain CLIB 122 / E 150) (Yeast).